The sequence spans 523 residues: Bifunctional purine biosynthesis protein PurH (523 aa).

The 149-residue stretch at 4–152 (DHIRRPIRRA…KNHPSVAVVT (149 aa)) folds into the MGS-like domain.

The protein belongs to the PurH family.

The enzyme catalyses (6R)-10-formyltetrahydrofolate + 5-amino-1-(5-phospho-beta-D-ribosyl)imidazole-4-carboxamide = 5-formamido-1-(5-phospho-D-ribosyl)imidazole-4-carboxamide + (6S)-5,6,7,8-tetrahydrofolate. It catalyses the reaction IMP + H2O = 5-formamido-1-(5-phospho-D-ribosyl)imidazole-4-carboxamide. It functions in the pathway purine metabolism; IMP biosynthesis via de novo pathway; 5-formamido-1-(5-phospho-D-ribosyl)imidazole-4-carboxamide from 5-amino-1-(5-phospho-D-ribosyl)imidazole-4-carboxamide (10-formyl THF route): step 1/1. It participates in purine metabolism; IMP biosynthesis via de novo pathway; IMP from 5-formamido-1-(5-phospho-D-ribosyl)imidazole-4-carboxamide: step 1/1. In Mycobacterium ulcerans (strain Agy99), this protein is Bifunctional purine biosynthesis protein PurH.